The chain runs to 150 residues: Ribonuclease H (150 aa).

The RNase H type-1 domain occupies 1-142 (MSDSVELFTD…ADQLANRGVD (142 aa)). Mg(2+)-binding residues include aspartate 10, glutamate 48, aspartate 70, and aspartate 134.

It belongs to the RNase H family. Monomer. It depends on Mg(2+) as a cofactor.

It is found in the cytoplasm. It catalyses the reaction Endonucleolytic cleavage to 5'-phosphomonoester.. Its function is as follows. Endonuclease that specifically degrades the RNA of RNA-DNA hybrids. The chain is Ribonuclease H from Pseudomonas syringae pv. syringae (strain B728a).